Here is a 432-residue protein sequence, read N- to C-terminus: Adenylosuccinate synthetase (432 aa).

Residues 13 to 19 and 41 to 43 contribute to the GTP site; these read GDEGKGK and GHT. The active-site Proton acceptor is Asp14. Residues Asp14 and Gly41 each contribute to the Mg(2+) site. IMP is bound by residues 14–17, 39–42, Thr130, Arg144, Gln225, Thr240, and Arg304; these read DEGK and NAGH. Catalysis depends on His42, which acts as the Proton donor. Residue 300–306 coordinates substrate; sequence ATTGRKR. GTP-binding positions include Arg306, 332-334, and 415-417; these read KLD and STG.

This sequence belongs to the adenylosuccinate synthetase family. In terms of assembly, homodimer. The cofactor is Mg(2+).

It is found in the cytoplasm. The enzyme catalyses IMP + L-aspartate + GTP = N(6)-(1,2-dicarboxyethyl)-AMP + GDP + phosphate + 2 H(+). The protein operates within purine metabolism; AMP biosynthesis via de novo pathway; AMP from IMP: step 1/2. Functionally, plays an important role in the de novo pathway of purine nucleotide biosynthesis. Catalyzes the first committed step in the biosynthesis of AMP from IMP. The chain is Adenylosuccinate synthetase from Alteromonas mediterranea (strain DSM 17117 / CIP 110805 / LMG 28347 / Deep ecotype).